A 313-amino-acid polypeptide reads, in one-letter code: Ribosomal RNA small subunit methyltransferase H (313 aa).

S-adenosyl-L-methionine contacts are provided by residues 35-37, D55, F80, D102, and Q109; that span reads GGH.

The protein belongs to the methyltransferase superfamily. RsmH family.

It is found in the cytoplasm. It carries out the reaction cytidine(1402) in 16S rRNA + S-adenosyl-L-methionine = N(4)-methylcytidine(1402) in 16S rRNA + S-adenosyl-L-homocysteine + H(+). Its function is as follows. Specifically methylates the N4 position of cytidine in position 1402 (C1402) of 16S rRNA. The chain is Ribosomal RNA small subunit methyltransferase H from Shewanella woodyi (strain ATCC 51908 / MS32).